The sequence spans 236 residues: Small ribosomal subunit protein uS2c (236 aa).

This sequence belongs to the universal ribosomal protein uS2 family.

The protein resides in the plastid. Its subcellular location is the chloroplast. This Guizotia abyssinica (Niger) protein is Small ribosomal subunit protein uS2c (rps2).